Consider the following 332-residue polypeptide: Ribosomal RNA small subunit methyltransferase C (332 aa).

It belongs to the methyltransferase superfamily. RsmC family. Monomer.

Its subcellular location is the cytoplasm. It carries out the reaction guanosine(1207) in 16S rRNA + S-adenosyl-L-methionine = N(2)-methylguanosine(1207) in 16S rRNA + S-adenosyl-L-homocysteine + H(+). Functionally, specifically methylates the guanine in position 1207 of 16S rRNA in the 30S particle. In Pseudomonas fluorescens (strain ATCC BAA-477 / NRRL B-23932 / Pf-5), this protein is Ribosomal RNA small subunit methyltransferase C.